Reading from the N-terminus, the 488-residue chain is DNA polymerase processivity factor (488 aa).

3 disordered regions span residues 1–26 (MTDS…GQPE), 331–453 (SPSA…RSGS), and 469–488 (PGAF…FGFP). Positions 331–344 (SPSAGSSASRASGS) are enriched in low complexity. Positions 345 to 355 (EPTDSQDSASD) are enriched in polar residues. Over residues 368-379 (AARAGEAGALHA) the composition is skewed to low complexity. The span at 383-393 (PSSTTRVTPTT) shows a compositional bias: polar residues. A Bipartite nuclear localization signal motif is present at residues 394–413 (KRGRSGGEDARADTALKKPK). Over residues 398 to 409 (SGGEDARADTAL) the composition is skewed to basic and acidic residues. A compositionally biased stretch (low complexity) spans 437–453 (ADGTAARPAAPDARSGS).

The protein belongs to the herpesviridae DNA polymerase processivity factor family. Interacts with the DNA polymerase catalytic subunit UL30. Interacts with the origin-binding protein.

The protein localises to the host nucleus. Plays an essential role in viral DNA replication by acting as the polymerase accessory subunit. Associates with the viral polymerase to increase its processivity and forms high-affinity direct interactions with DNA. Facilitates the origin-binding protein UL9 loading onto DNA thus increasing its ability to assemble into a functional complex capable of unwinding duplex DNA. In Homo sapiens (Human), this protein is DNA polymerase processivity factor.